The primary structure comprises 423 residues: MATIILGSQWGDEGKGKLTDILCPSAEICARSAGGHNAGHSIVAQGVSYDFHLLPSGLVNPKCMNLIGSGVVFHVPSFFSELEKLEAKGLAGVRDRIFVSDRCQVNFDLHAAVDGLEEVELGERKIGTTGRGIGPSYSTKASRSGVRISEVFDEAVFERKLRQLADGYRKRFGDLLKYDVEEEIARFKEYRKLLPNYVVDAVKFIKDAQDQNRKILIEGANALMLDIDYGTYPYVTSSNPCLGGIITGLAINPRKIETIVGVVKAYTTRVGDGIFKTEDEGEIGTKLQDIGREWGVSTGRKRRCGWLDLVVVKYSAAINHYTSLNLTKLDVLDTFPTLKVAVAYKDPATGEELDFFPADLSLLERCEVVYKEFEGWNTPTTHIKKFEELPAQARQYVEFIEQYVGVKVGWIGTGPDREDMIYR.

D12 (proton acceptor) is an active-site residue. Mg(2+) contacts are provided by D12 and G39. IMP contacts are provided by residues 37–40, T129, R143, N221, T236, and R300; that span reads NAGH. 39 to 41 contributes to the GTP binding site; the sequence is GHS. H40 serves as the catalytic Proton donor. 296-302 is a substrate binding site; that stretch reads VSTGRKR. GTP contacts are provided by residues R302, 328–330, and 412–414; these read KLD and GTG.

It belongs to the adenylosuccinate synthetase family. In terms of assembly, homodimer. Requires Mg(2+) as cofactor.

The protein localises to the cytoplasm. It catalyses the reaction IMP + L-aspartate + GTP = N(6)-(1,2-dicarboxyethyl)-AMP + GDP + phosphate + 2 H(+). It functions in the pathway purine metabolism; AMP biosynthesis via de novo pathway; AMP from IMP: step 1/2. Plays an important role in the de novo pathway and in the salvage pathway of purine nucleotide biosynthesis. Catalyzes the first committed step in the biosynthesis of AMP from IMP. This chain is Adenylosuccinate synthetase, found in Pyricularia oryzae (strain 70-15 / ATCC MYA-4617 / FGSC 8958) (Rice blast fungus).